A 331-amino-acid chain; its full sequence is Beta-ketoacyl-[acyl-carrier-protein] synthase III (331 aa).

Catalysis depends on residues C116 and H256. Positions 257-261 (QANTR) are ACP-binding. N286 is an active-site residue.

This sequence belongs to the thiolase-like superfamily. FabH family. As to quaternary structure, homodimer.

The protein resides in the cytoplasm. It carries out the reaction malonyl-[ACP] + acetyl-CoA + H(+) = 3-oxobutanoyl-[ACP] + CO2 + CoA. The protein operates within lipid metabolism; fatty acid biosynthesis. Functionally, catalyzes the condensation reaction of fatty acid synthesis by the addition to an acyl acceptor of two carbons from malonyl-ACP. Catalyzes the first condensation reaction which initiates fatty acid synthesis and may therefore play a role in governing the total rate of fatty acid production. Possesses both acetoacetyl-ACP synthase and acetyl transacylase activities. Its substrate specificity determines the biosynthesis of branched-chain and/or straight-chain of fatty acids. In Caldanaerobacter subterraneus subsp. tengcongensis (strain DSM 15242 / JCM 11007 / NBRC 100824 / MB4) (Thermoanaerobacter tengcongensis), this protein is Beta-ketoacyl-[acyl-carrier-protein] synthase III.